Here is a 201-residue protein sequence, read N- to C-terminus: Potassium-transporting ATPase KdpC subunit (201 aa).

The helical transmembrane segment at 7–29 (PALVLLTALTAITGLAYPLAMTG) threads the bilayer.

The protein belongs to the KdpC family. As to quaternary structure, the system is composed of three essential subunits: KdpA, KdpB and KdpC.

It localises to the cell inner membrane. Functionally, part of the high-affinity ATP-driven potassium transport (or Kdp) system, which catalyzes the hydrolysis of ATP coupled with the electrogenic transport of potassium into the cytoplasm. This subunit acts as a catalytic chaperone that increases the ATP-binding affinity of the ATP-hydrolyzing subunit KdpB by the formation of a transient KdpB/KdpC/ATP ternary complex. In Methylobacterium radiotolerans (strain ATCC 27329 / DSM 1819 / JCM 2831 / NBRC 15690 / NCIMB 10815 / 0-1), this protein is Potassium-transporting ATPase KdpC subunit.